Reading from the N-terminus, the 96-residue chain is DNA-directed RNA polymerase subunit Rpo11 (96 aa).

Belongs to the archaeal Rpo11/eukaryotic RPB11/RPC19 RNA polymerase subunit family. Part of the RNA polymerase complex.

The protein localises to the cytoplasm. It catalyses the reaction RNA(n) + a ribonucleoside 5'-triphosphate = RNA(n+1) + diphosphate. In terms of biological role, DNA-dependent RNA polymerase (RNAP) catalyzes the transcription of DNA into RNA using the four ribonucleoside triphosphates as substrates. This is DNA-directed RNA polymerase subunit Rpo11 from Haloquadratum walsbyi (strain DSM 16790 / HBSQ001).